Consider the following 262-residue polypeptide: Snake venom serine protease (262 aa).

The first 18 residues, 1–18 (MVLIRVLANLLILQLSYA), serve as a signal peptide directing secretion. Residues 19–24 (QKSSEL) constitute a propeptide that is removed on maturation. The region spanning 25–253 (VIGGDECNIN…YTEWIQSIIA (229 aa)) is the Peptidase S1 domain. 6 disulfides stabilise this stretch: Cys31/Cys167, Cys50/Cys66, Cys102/Cys260, Cys146/Cys214, Cys178/Cys193, and Cys204/Cys229. Catalysis depends on charge relay system residues His65 and Asp114. Residues Asn125 and Asn158 are each glycosylated (N-linked (GlcNAc...) asparagine). Ser208 (charge relay system) is an active-site residue.

The protein belongs to the peptidase S1 family. Snake venom subfamily. In terms of assembly, monomer. In terms of tissue distribution, expressed by the venom gland.

The protein resides in the secreted. Functionally, snake venom serine protease that may act in the hemostasis system of the prey. The chain is Snake venom serine protease from Crotalus durissus durissus (Central American rattlesnake).